A 190-amino-acid polypeptide reads, in one-letter code: Lipocalin Can f 6.0101 (190 aa).

The N-terminal stretch at 1–15 (MKLLLLCLGLILVHA) is a signal peptide. The segment at 43–54 (SDIKEKIEENGS) is igE-binding. Asparagine 52 and asparagine 67 each carry an N-linked (GlcNAc...) asparagine glycan. An igE-binding region spans residues 76 to 83 (TKVNGKCT). A disulfide bridge connects residues cysteine 82 and cysteine 175. Residue asparagine 90 is glycosylated (N-linked (GlcNAc...) asparagine). An igE-binding region spans residues 91-97 (KTEKDGE). The segment at 100–109 (VVHDGYNLFR) is no IgE-binding. IgE-binding regions lie at residues 125-132 (NVNQEQEF) and 139-152 (GRKP…KEKF).

The protein belongs to the calycin superfamily. Lipocalin family. In terms of assembly, monomer. Expressed in saliva (at protein level). Expressed in dander (at protein level). According to PubMed:22104604, expressed in submaxillary gland. In contrast, according to PubMed:22515174, not expressed in submaxillary gland. Expressed in bladder and skin, but not in tongue.

The protein localises to the secreted. The sequence is that of Lipocalin Can f 6.0101 from Canis lupus familiaris (Dog).